The chain runs to 327 residues: Cytochrome f (327 aa).

The first 24 residues, 1–24 (MKRIGLVFCALLLLLGMGARPAAA), serve as a signal peptide directing secretion. Heme is bound by residues Tyr25, Cys45, Cys48, and His49. The helical transmembrane segment at 293-313 (VKWLVAFLAAITITQVLLVLK) threads the bilayer.

This sequence belongs to the cytochrome f family. As to quaternary structure, the 4 large subunits of the cytochrome b6-f complex are cytochrome b6, subunit IV (17 kDa polypeptide, PetD), cytochrome f and the Rieske protein, while the 4 small subunits are PetG, PetL, PetM and PetN. The complex functions as a dimer. Heme serves as cofactor.

It is found in the cellular thylakoid membrane. Functionally, component of the cytochrome b6-f complex, which mediates electron transfer between photosystem II (PSII) and photosystem I (PSI), cyclic electron flow around PSI, and state transitions. This chain is Cytochrome f, found in Synechococcus sp. (strain JA-2-3B'a(2-13)) (Cyanobacteria bacterium Yellowstone B-Prime).